Reading from the N-terminus, the 65-residue chain is Weak toxin CM-11 (65 aa).

Disulfide bonds link Cys3-Cys24, Cys6-Cys11, Cys17-Cys42, Cys46-Cys57, and Cys58-Cys63.

It belongs to the three-finger toxin family. Ancestral subfamily. Orphan group II sub-subfamily. As to expression, expressed by the venom gland.

It localises to the secreted. Binds with low affinity to muscular (alpha-1-beta-1-delta-epsilon/CHRNA1-CHRNB1-CHRND-CHRNE) and very low affinity to neuronal (alpha-7/CHRNA7) nicotinic acetylcholine receptor (nAChR). In Naja haje haje (Egyptian cobra), this protein is Weak toxin CM-11.